We begin with the raw amino-acid sequence, 1557 residues long: Probable kinase PglW (1557 aa).

The region spanning 12 to 130 (SEFEHERRGL…VAEAVCFTDN (119 aa)) is the NERD domain. Protein kinase domains lie at 195-490 (ELER…LEVV) and 530-816 (WEVR…KVFL). Residues 536–544 (LGTGSTSRA) and Lys564 contribute to the ATP site. Disordered regions lie at residues 615–634 (DERDDDGPGAEGATRPRRRE) and 821–861 (TVPS…QRDR). The span at 830–849 (PAAPADGAAPAEGAAAGIAD) shows a compositional bias: low complexity.

The protein belongs to the protein kinase superfamily. Ser/Thr protein kinase family.

BREX systems (bacteriophage exclusion) provide immunity against bacteriophage. Part of a type 2 BREX system. Previously called the phage growth limitation (Pgl) system, it confers protection against bacteriophage phiC31. The bacteria allows one cycle of phage infection, but subsequent cycles are impaired, protecting the original bacterial colony. The system undergoes high rates (10(-3) to 10(-4)) of phase reversion, i.e. loss and regain of phiC31 resistance. When the pglW-pglX-pglY-pglZ genes are transformed into a susceptible S.lividans (strain 1326) they confer resistance to infection by phage phiC31 and phiBT1; all 4 genes are necessary. The proteins has kinase domains and might bind DNA. Its function is as follows. Autophosphorylates when synthesized in vitro, cannot be expressed in E.coli. The chain is Probable kinase PglW from Streptomyces coelicolor (strain ATCC BAA-471 / A3(2) / M145).